The following is a 468-amino-acid chain: Na(+)/H(+) antiporter NhaA 2 (468 aa).

The next 11 membrane-spanning stretches (helical) occupy residues 31 to 51 (FLHVQAASGIVLLIATAVALA), 82 to 102 (LHFWINDGLMTIFFFVVGLEI), 118 to 138 (VLPVAAALGGMLFPALIYLAL), 147 to 167 (GWGVPMATDIAFAVGALALLG), 176 to 196 (VLLLALAIIDDIGAILVIAVF), 199 to 219 (SSISVTGFGLVAVGIAGVLAL), 226 to 246 (SPVVYAAAGVVIWAGLLSAGV), 321 to 341 (PWVAYGIMPLFALANAGVSLG), 353 to 373 (LLLGVVFGLTMGKPLGIMVAC), 393 to 413 (VLVVGCVAGIGFTMAIFVAGL), and 422 to 442 (GVAKLAVLLGSLISALVAMAV).

Belongs to the NhaA Na(+)/H(+) (TC 2.A.33) antiporter family.

The protein localises to the cell inner membrane. It carries out the reaction Na(+)(in) + 2 H(+)(out) = Na(+)(out) + 2 H(+)(in). Na(+)/H(+) antiporter that extrudes sodium in exchange for external protons. In Sorangium cellulosum (strain So ce56) (Polyangium cellulosum (strain So ce56)), this protein is Na(+)/H(+) antiporter NhaA 2.